Consider the following 199-residue polypeptide: DnaJ homolog subfamily C member 5B (199 aa).

Phosphoserine is present on residues serine 14 and serine 16. The J domain occupies 19–84 (ALYEILGLHK…SKRNIYDKYG (66 aa)).

In terms of assembly, interacts with the chaperone complex consisting of HSC70 and SGTA. Post-translationally, palmitoylated.

It is found in the membrane. This Sus scrofa (Pig) protein is DnaJ homolog subfamily C member 5B (DNAJC5B).